We begin with the raw amino-acid sequence, 324 residues long: Endochitinase 1 (324 aa).

Residues 1–22 (MSFLQALSIFLLLLLYVVVGSA) form the signal peptide. Residues 23–64 (EQCGRQAGGALCPGGLCCSQFGWCGSTADYCTVPGCQSQCSG) enclose the Chitin-binding type-1 domain. 7 cysteine pairs are disulfide-bonded: Cys-25-Cys-40, Cys-34-Cys-46, Cys-39-Cys-53, Cys-58-Cys-62, Cys-95-Cys-158, Cys-170-Cys-178, and Cys-277-Cys-309. The active-site Proton donor is Glu-139. The propeptide at 318–324 (GVSVDSM) is removed in mature form.

It belongs to the glycosyl hydrolase 19 family. Chitinase class I subfamily.

It catalyses the reaction Random endo-hydrolysis of N-acetyl-beta-D-glucosaminide (1-&gt;4)-beta-linkages in chitin and chitodextrins.. Functionally, defense against chitin-containing fungal pathogens. This chain is Endochitinase 1, found in Gossypium hirsutum (Upland cotton).